The primary structure comprises 559 residues: Polypeptide N-acetylgalactosaminyltransferase 1 (559 aa).

Over 1 to 8 the chain is Cytoplasmic; the sequence is MRKFAYCK. The chain crosses the membrane as a helical; Signal-anchor for type II membrane protein span at residues 9–28; sequence VVLATSLIWVLLDMFLLLYF. The Lumenal portion of the chain corresponds to 29-559; the sequence is SECNKCDEKK…LRNVTLPEIF (531 aa). The segment at 45-65 is disordered; that stretch reads GDVLEPVQKPHEGPGEMGKPV. N-linked (GlcNAc...) asparagine glycosylation occurs at N95. Intrachain disulfides connect C106-C339, C330-C408, C442-C459, C482-C497, and C523-C540. Positions 115 to 225 are catalytic subdomain A; it reads LPTTSVVIVF…VGWLEPLLAR (111 aa). Substrate contacts are provided by D156 and R186. D209 and H211 together coordinate Mn(2+). The catalytic subdomain B stretch occupies residues 285 to 347; the sequence is PVRTPTMAGG…TCSHVGHVFR (63 aa). W316 is a substrate binding site. Mn(2+) is bound at residue H344. Positions 347 and 352 each coordinate substrate. A Ricin B-type lectin domain is found at 429–551; that stretch reads FSLGEIRNVE…GSRSQQWLLR (123 aa). The N-linked (GlcNAc...) asparagine glycan is linked to N552.

This sequence belongs to the glycosyltransferase 2 family. GalNAc-T subfamily. Requires Mn(2+) as cofactor. In terms of tissue distribution, widely expressed. Expressed in all tissues tested.

It is found in the golgi apparatus. Its subcellular location is the golgi stack membrane. The protein localises to the secreted. The enzyme catalyses L-seryl-[protein] + UDP-N-acetyl-alpha-D-galactosamine = a 3-O-[N-acetyl-alpha-D-galactosaminyl]-L-seryl-[protein] + UDP + H(+). It catalyses the reaction L-threonyl-[protein] + UDP-N-acetyl-alpha-D-galactosamine = a 3-O-[N-acetyl-alpha-D-galactosaminyl]-L-threonyl-[protein] + UDP + H(+). It participates in protein modification; protein glycosylation. Catalyzes the initial reaction in O-linked oligosaccharide biosynthesis, the transfer of an N-acetyl-D-galactosamine residue to a serine or threonine residue on the protein receptor. Has a broad spectrum of substrates such as apomucin-, MUC5AC-, MUC1- and MUC2-derived peptides. The protein is Polypeptide N-acetylgalactosaminyltransferase 1 of Homo sapiens (Human).